Reading from the N-terminus, the 284-residue chain is AA14 family lytic polysaccharide monooxygenase B (284 aa).

The first 20 residues, 1–20 (MGYLSKLVTSVVFAIPLASA), serve as a signal peptide directing secretion. 4 N-linked (GlcNAc...) asparagine glycosylation sites follow: asparagine 42, asparagine 96, asparagine 142, and asparagine 183. Cysteines 197 and 218 form a disulfide.

It belongs to the polysaccharide monooxygenase AA14 family. It depends on Cu(2+) as a cofactor.

The protein resides in the secreted. In terms of biological role, lytic polysaccharide monooxygenase (LPMO) that plays decomposes some specific network structures formed between cellulose and hemicellulose in the plant cell walls. Catalysis by LPMOs requires the reduction of the active-site copper from Cu(II) to Cu(I) by a reducing agent and H(2)O(2) or O(2) as a cosubstrate. The sequence is that of AA14 family lytic polysaccharide monooxygenase B from Talaromyces rugulosus (Penicillium rugulosum).